Reading from the N-terminus, the 347-residue chain is Gas vesicle ATPase GvpN (347 aa).

The interval 1–50 is disordered; sequence MTNSSRERKVRGSQIRTSRREKQDKNARNRTEKELTRLENHQTHRTKNGT. Over residues 18–42 the composition is skewed to basic and acidic residues; sequence SRREKQDKNARNRTEKELTRLENHQ. An ATP-binding site is contributed by 91 to 98; sequence GPTGCGKT.

This sequence belongs to the CbbQ/NirQ/NorQ/GpvN family. As to quaternary structure, forms homodimers, a GvpN-GvpO heterodimer, interacts with GvpC and GvpL, might interact with GvpA.

It is found in the gas vesicle. It localises to the cytoplasm. The enzyme catalyses ATP + H2O = ADP + phosphate + H(+). Functionally, an ATPase that functions in gas vesicle formation. A minor component of the gas vesicle, also found in soluble extracts. Gas vesicles are hollow, gas filled proteinaceous nanostructures found in some microorganisms. They allow positioning of halobacteria at the optimal depth for growth in the poorly aerated, shallow brine pools of their habitat. In terms of biological role, expression of a 9.5 kb mc-vac DNA fragment containing 2 divergently transcribed regions (gvpD-gvpE-gvpF-gvpG-gvpH-gvpI-gvpJ-gvpK-gvpL-gvpM and gvpA-gvpC-gvpN-gvpO) allows H.volcanii to produce gas vesicles. This is Gas vesicle ATPase GvpN from Haloferax mediterranei (strain ATCC 33500 / DSM 1411 / JCM 8866 / NBRC 14739 / NCIMB 2177 / R-4) (Halobacterium mediterranei).